A 204-amino-acid polypeptide reads, in one-letter code: Guanylate kinase (204 aa).

A Guanylate kinase-like domain is found at 5 to 184 (GLLLVLSGPS…AVNHIKAIVD (180 aa)). 12-19 (GPSGVGKG) provides a ligand contact to ATP.

Belongs to the guanylate kinase family.

It localises to the cytoplasm. It carries out the reaction GMP + ATP = GDP + ADP. Essential for recycling GMP and indirectly, cGMP. The protein is Guanylate kinase of Lactobacillus delbrueckii subsp. bulgaricus (strain ATCC 11842 / DSM 20081 / BCRC 10696 / JCM 1002 / NBRC 13953 / NCIMB 11778 / NCTC 12712 / WDCM 00102 / Lb 14).